Here is a 453-residue protein sequence, read N- to C-terminus: SH2 domain-containing protein 4A (453 aa).

Residues 96 to 127 adopt a coiled-coil conformation; it reads EIIAEQARREAEKEAEQLRKKQEVELSQLSTL. The segment at 280-301 is disordered; that stretch reads AVKRPPIPPKPKLPPSANNSSI. Residues 284–293 are compositionally biased toward pro residues; sequence PPIPPKPKLP. Residues 347–439 enclose the SH2 domain; that stretch reads WFHGIISRQE…LGRELLRFPC (93 aa).

Its subcellular location is the cytoplasm. In terms of biological role, inhibits estrogen-induced cell proliferation. The sequence is that of SH2 domain-containing protein 4A (sh2d4a) from Xenopus tropicalis (Western clawed frog).